The sequence spans 122 residues: Large ribosomal subunit protein uL14 (122 aa).

It belongs to the universal ribosomal protein uL14 family. In terms of assembly, part of the 50S ribosomal subunit. Forms a cluster with proteins L3 and L19. In the 70S ribosome, L14 and L19 interact and together make contacts with the 16S rRNA in bridges B5 and B8.

Functionally, binds to 23S rRNA. Forms part of two intersubunit bridges in the 70S ribosome. The protein is Large ribosomal subunit protein uL14 of Desulfitobacterium hafniense (strain DSM 10664 / DCB-2).